We begin with the raw amino-acid sequence, 289 residues long: 33 kDa chaperonin (289 aa).

Intrachain disulfides connect Cys-237–Cys-239 and Cys-270–Cys-273.

It belongs to the HSP33 family. Post-translationally, under oxidizing conditions two disulfide bonds are formed involving the reactive cysteines. Under reducing conditions zinc is bound to the reactive cysteines and the protein is inactive.

The protein localises to the cytoplasm. Its function is as follows. Redox regulated molecular chaperone. Protects both thermally unfolding and oxidatively damaged proteins from irreversible aggregation. Plays an important role in the bacterial defense system toward oxidative stress. The sequence is that of 33 kDa chaperonin from Oceanobacillus iheyensis (strain DSM 14371 / CIP 107618 / JCM 11309 / KCTC 3954 / HTE831).